An 85-amino-acid chain; its full sequence is Large ribosomal subunit protein bL27 (85 aa).

The interval 1–20 (MAHKKAGGSTRNGRDSEAKR) is disordered.

This sequence belongs to the bacterial ribosomal protein bL27 family.

This is Large ribosomal subunit protein bL27 from Escherichia coli O139:H28 (strain E24377A / ETEC).